Reading from the N-terminus, the 260-residue chain is Cytochrome c oxidase subunit 2 (260 aa).

Over 1–41 the chain is Mitochondrial intermembrane; that stretch reads MIVLKWLFFTISPCDAAEPWQLGFQDAATPIMQGIIDLHHD. A helical membrane pass occupies residues 42-62; sequence IFFFLILILVFVLWILVRALW. Residues 63–86 lie on the Mitochondrial matrix side of the membrane; sequence HFHYKKNAIPQRIVHGTTIEILWT. The helical transmembrane segment at 87-107 threads the bilayer; sequence IFPSIILMFIAIPSFALLYSM. Residues 108–260 are Mitochondrial intermembrane-facing; it reads DEVVVDPAIT…NQLIPQTGEA (153 aa). Residues His187, Cys222, Glu224, Cys226, His230, and Met233 each coordinate Cu cation. Glu224 lines the Mg(2+) pocket.

It belongs to the cytochrome c oxidase subunit 2 family. In terms of assembly, component of the cytochrome c oxidase (complex IV, CIV), a multisubunit enzyme composed of a catalytic core of 3 subunits and several supernumerary subunits. The complex exists as a monomer or a dimer and forms supercomplexes (SCs) in the inner mitochondrial membrane with ubiquinol-cytochrome c oxidoreductase (cytochrome b-c1 complex, complex III, CIII). The cofactor is Cu cation.

Its subcellular location is the mitochondrion inner membrane. The catalysed reaction is 4 Fe(II)-[cytochrome c] + O2 + 8 H(+)(in) = 4 Fe(III)-[cytochrome c] + 2 H2O + 4 H(+)(out). Functionally, component of the cytochrome c oxidase, the last enzyme in the mitochondrial electron transport chain which drives oxidative phosphorylation. The respiratory chain contains 3 multisubunit complexes succinate dehydrogenase (complex II, CII), ubiquinol-cytochrome c oxidoreductase (cytochrome b-c1 complex, complex III, CIII) and cytochrome c oxidase (complex IV, CIV), that cooperate to transfer electrons derived from NADH and succinate to molecular oxygen, creating an electrochemical gradient over the inner membrane that drives transmembrane transport and the ATP synthase. Cytochrome c oxidase is the component of the respiratory chain that catalyzes the reduction of oxygen to water. Electrons originating from reduced cytochrome c in the intermembrane space (IMS) are transferred via the dinuclear copper A center (CU(A)) of subunit 2 and heme A of subunit 1 to the active site in subunit 1, a binuclear center (BNC) formed by heme A3 and copper B (CU(B)). The BNC reduces molecular oxygen to 2 water molecules using 4 electrons from cytochrome c in the IMS and 4 protons from the mitochondrial matrix. The sequence is that of Cytochrome c oxidase subunit 2 (COX2) from Arabidopsis thaliana (Mouse-ear cress).